Reading from the N-terminus, the 149-residue chain is Large ribosomal subunit protein bL9 (149 aa).

It belongs to the bacterial ribosomal protein bL9 family.

In terms of biological role, binds to the 23S rRNA. The protein is Large ribosomal subunit protein bL9 of Aliivibrio fischeri (strain ATCC 700601 / ES114) (Vibrio fischeri).